Consider the following 71-residue polypeptide: UPF0435 protein SE_1565 (71 aa).

It belongs to the UPF0435 family.

This is UPF0435 protein SE_1565 from Staphylococcus epidermidis (strain ATCC 12228 / FDA PCI 1200).